Consider the following 480-residue polypeptide: Initiation-specific alpha-1,6-mannosyltransferase (480 aa).

Topologically, residues 1 to 15 are cytoplasmic; it reads MSRKLSHLIATRKSK. The chain crosses the membrane as a helical; Signal-anchor for type II membrane protein span at residues 16–30; sequence TIVVTVLLIYSLLTF. The Lumenal portion of the chain corresponds to 31–480; it reads HLSNKRLLSQ…EDADKNAGHK (450 aa). The DXD motif motif lies at 187–189; the sequence is DMD. 4 N-linked (GlcNAc...) asparagine glycosylation sites follow: asparagine 203, asparagine 281, asparagine 341, and asparagine 393.

Belongs to the glycosyltransferase 32 family. Mn(2+) serves as cofactor. In terms of processing, glycosylated.

The protein localises to the endoplasmic reticulum membrane. The protein resides in the golgi apparatus membrane. It catalyses the reaction Transfers an alpha-D-mannosyl residue from GDP-mannose into lipid-linked oligosaccharide, forming an alpha-(1-&gt;6)-D-mannosyl-D-mannose linkage.. In terms of biological role, mannosyltransferase involved in outer chain elongation of asparagine-linked oligosaccharides of the type Man(9)GlcNAc(2). Adds the first alpha-1,6-mannose to the Man(8)GlcNAc(2) and Man(9)GlcNAc(2), but not Man(5)GlcNAc(2), endoplasmic reticulum intermediates. Represents the first enzymatic event required for synthesis of outer chain mannose linkages on yeast secretory proteins. Also has the potential to transfer a second alpha-1,6-mannose to the Man(8)GlcNAc(2) core oligosaccharide. This Saccharomyces cerevisiae (strain ATCC 204508 / S288c) (Baker's yeast) protein is Initiation-specific alpha-1,6-mannosyltransferase.